Reading from the N-terminus, the 295-residue chain is Dehydrodolichyl diphosphate synthase 6 (295 aa).

The protein belongs to the UPP synthase family. Mg(2+) serves as cofactor.

Its pathway is protein modification; protein glycosylation. In terms of biological role, catalyzes cis-prenyl chain elongation to produce the polyprenyl backbone of dolichol, a glycosyl carrier-lipid required for the biosynthesis of several classes of glycoprotein. This is Dehydrodolichyl diphosphate synthase 6 from Arabidopsis thaliana (Mouse-ear cress).